We begin with the raw amino-acid sequence, 159 residues long: Cytochrome c-type biogenesis CcmH-like mitochondrial protein (159 aa).

Over 1 to 82 (MEKTDEERKK…ETVLYAPKFD (82 aa)) the chain is Mitochondrial intermembrane. Heme contacts are provided by cysteine 27 and cysteine 30. The helical transmembrane segment at 83-105 (LQTAALWLTPVIIAGGTAAGIVY) threads the bilayer. Topologically, residues 106-159 (QKHRLRKNVDIMALNLIRGVPLTPKERVTILDVLIPPSPPPQGVVSRLRRWLNR) are mitochondrial matrix.

This sequence belongs to the CcmH/CycL/Ccl2/NrfF family. Interacts (via N-terminus) with CYTC-1. Interacts with CCMFN1 and CCMFN2.

The protein resides in the mitochondrion inner membrane. In terms of biological role, plays a central role in mitochondrial cytochrome c maturation. Probable component of a heme lyase complex involved in the reduction of apocytochrome c. Forms a complex with CCMF proteins (CCMFC, CCMFN1 and CCMFN2) that performs the assembly of heme with c-type apocytochromes in mitochondria. This Arabidopsis thaliana (Mouse-ear cress) protein is Cytochrome c-type biogenesis CcmH-like mitochondrial protein.